Reading from the N-terminus, the 158-residue chain is Snaclec mucrocetin subunit alpha (158 aa).

An N-terminal signal peptide occupies residues 1 to 23 (MGRFIFVSFGLLVVFLSLSGTGA). 3 disulfide bridges follow: C27–C38, C55–C152, and C127–C144. The 120-residue stretch at 34 to 153 (YDRYCYQAFS…CGRENPFVCK (120 aa)) folds into the C-type lectin domain.

This sequence belongs to the snaclec family. As to quaternary structure, tetramer of heterodimers of alpha and beta subunits (alphabeta)(4); disulfide-linked. As to expression, expressed by the venom gland.

The protein localises to the secreted. Functionally, platelet-agglutinating factor that acts in a vWF-independent manner. Binds specifically to platelet GPIbalpha (GP1BA) to a distinct binding site from that of flavocetin-A. This Protobothrops mucrosquamatus (Taiwan habu) protein is Snaclec mucrocetin subunit alpha.